Reading from the N-terminus, the 316-residue chain is Beta-ketoacyl-[acyl-carrier-protein] synthase III 1 (316 aa).

Catalysis depends on residues C112 and H243. The interval 244–248 (QANYR) is ACP-binding. N273 is an active-site residue.

This sequence belongs to the thiolase-like superfamily. FabH family. As to quaternary structure, homodimer.

The protein resides in the cytoplasm. The catalysed reaction is malonyl-[ACP] + acetyl-CoA + H(+) = 3-oxobutanoyl-[ACP] + CO2 + CoA. The protein operates within lipid metabolism; fatty acid biosynthesis. Its function is as follows. Catalyzes the condensation reaction of fatty acid synthesis by the addition to an acyl acceptor of two carbons from malonyl-ACP. Catalyzes the first condensation reaction which initiates fatty acid synthesis and may therefore play a role in governing the total rate of fatty acid production. Possesses both acetoacetyl-ACP synthase and acetyl transacylase activities. Its substrate specificity determines the biosynthesis of branched-chain and/or straight-chain of fatty acids. The sequence is that of Beta-ketoacyl-[acyl-carrier-protein] synthase III 1 from Vibrio vulnificus (strain CMCP6).